The primary structure comprises 155 residues: Cathelicidin-1 (155 aa).

The first 29 residues, 1-29 (METPRASLSLGRWSLWLLLLGLALPSASA), serve as a signal peptide directing secretion. Residue glutamine 30 is modified to Pyrrolidone carboxylic acid. Residues 30–143 (QALSYREAVL…KQPWAPPQAA (114 aa)) constitute a propeptide that is removed on maturation. Intrachain disulfides connect cysteine 85/cysteine 96, cysteine 107/cysteine 124, and cysteine 146/cysteine 154.

This sequence belongs to the cathelicidin family. In terms of tissue distribution, large granules of neutrophils.

It is found in the secreted. Potent microbicidal activity; active against S.aureus and E.coli. This is Cathelicidin-1 (CATHL1) from Bos taurus (Bovine).